Consider the following 466-residue polypeptide: ATP synthase subunit beta (466 aa).

Residue 152–159 (GGAGVGKT) participates in ATP binding.

Belongs to the ATPase alpha/beta chains family. As to quaternary structure, F-type ATPases have 2 components, CF(1) - the catalytic core - and CF(0) - the membrane proton channel. CF(1) has five subunits: alpha(3), beta(3), gamma(1), delta(1), epsilon(1). CF(0) has three main subunits: a(1), b(2) and c(9-12). The alpha and beta chains form an alternating ring which encloses part of the gamma chain. CF(1) is attached to CF(0) by a central stalk formed by the gamma and epsilon chains, while a peripheral stalk is formed by the delta and b chains.

Its subcellular location is the cell inner membrane. The catalysed reaction is ATP + H2O + 4 H(+)(in) = ADP + phosphate + 5 H(+)(out). Produces ATP from ADP in the presence of a proton gradient across the membrane. The catalytic sites are hosted primarily by the beta subunits. The protein is ATP synthase subunit beta of Sulfurovum sp. (strain NBC37-1).